A 130-amino-acid polypeptide reads, in one-letter code: Large ribosomal subunit protein bL19 (130 aa).

It belongs to the bacterial ribosomal protein bL19 family.

Functionally, this protein is located at the 30S-50S ribosomal subunit interface and may play a role in the structure and function of the aminoacyl-tRNA binding site. This is Large ribosomal subunit protein bL19 from Cupriavidus taiwanensis (strain DSM 17343 / BCRC 17206 / CCUG 44338 / CIP 107171 / LMG 19424 / R1) (Ralstonia taiwanensis (strain LMG 19424)).